We begin with the raw amino-acid sequence, 577 residues long: Arginine--tRNA ligase (577 aa).

Residues 132–142 (ANPTGPLHVGH) carry the 'HIGH' region motif.

Belongs to the class-I aminoacyl-tRNA synthetase family. Monomer.

It is found in the cytoplasm. The enzyme catalyses tRNA(Arg) + L-arginine + ATP = L-arginyl-tRNA(Arg) + AMP + diphosphate. The chain is Arginine--tRNA ligase from Herminiimonas arsenicoxydans.